The chain runs to 353 residues: S-adenosylmethionine:tRNA ribosyltransferase-isomerase (353 aa).

The protein belongs to the QueA family. Monomer.

It is found in the cytoplasm. The catalysed reaction is 7-aminomethyl-7-carbaguanosine(34) in tRNA + S-adenosyl-L-methionine = epoxyqueuosine(34) in tRNA + adenine + L-methionine + 2 H(+). It participates in tRNA modification; tRNA-queuosine biosynthesis. Transfers and isomerizes the ribose moiety from AdoMet to the 7-aminomethyl group of 7-deazaguanine (preQ1-tRNA) to give epoxyqueuosine (oQ-tRNA). The protein is S-adenosylmethionine:tRNA ribosyltransferase-isomerase of Dinoroseobacter shibae (strain DSM 16493 / NCIMB 14021 / DFL 12).